The sequence spans 141 residues: Nucleoside diphosphate kinase (141 aa).

ATP-binding residues include lysine 11, phenylalanine 59, arginine 87, threonine 93, arginine 104, and asparagine 114. The Pros-phosphohistidine intermediate role is filled by histidine 117.

The protein belongs to the NDK family. As to quaternary structure, homotetramer. Mg(2+) serves as cofactor.

Its subcellular location is the cytoplasm. It carries out the reaction a 2'-deoxyribonucleoside 5'-diphosphate + ATP = a 2'-deoxyribonucleoside 5'-triphosphate + ADP. The enzyme catalyses a ribonucleoside 5'-diphosphate + ATP = a ribonucleoside 5'-triphosphate + ADP. Its function is as follows. Major role in the synthesis of nucleoside triphosphates other than ATP. The ATP gamma phosphate is transferred to the NDP beta phosphate via a ping-pong mechanism, using a phosphorylated active-site intermediate. This chain is Nucleoside diphosphate kinase, found in Pseudomonas putida (strain GB-1).